The primary structure comprises 310 residues: Carbamate kinase 1 (310 aa).

In terms of assembly, homodimer (predominantly) and homotetramer.

The protein resides in the cytoplasm. The enzyme catalyses hydrogencarbonate + NH4(+) + ATP = carbamoyl phosphate + ADP + H2O + H(+). It participates in metabolic intermediate metabolism; carbamoyl phosphate degradation; CO(2) and NH(3) from carbamoyl phosphate: step 1/1. Inhibited by adenosine(5')pentaphospho(5')adenosine (Ap5A), Ap6A and to a much lower extent by Ap4A. Functionally, catalyzes the reversible synthesis of carbamate and ATP from carbamoyl phosphate and ADP. Can also catalyze, although with low efficiency, the phosphorylation of bicarbonate, leading to the formation of carboxyphosphate, an unstable intermediate found in the reactions catalyzed by carbamoyl-phosphate synthase and biotin carboxylase. Can also use acetate. This Enterococcus faecium (Streptococcus faecium) protein is Carbamate kinase 1 (arcC1).